Consider the following 402-residue polypeptide: MRGEERWQEQPALASHPSRATLRPRGWPRLGLAPTGVGSSCPPAPASELARHLARRAPVSASPPVLPPIKDQGARPPTLAASAAAASSPPPPPPPPIPPLPPSTSTSAARPTDMAGVTSKRRSSSASTSSSSGDGAAVSDRPRGVTRKRRSGGRCPRPAASLRPAAPRPSSHHTAGLRVILQKELRYSDVSQLGRIVLPKKEAEAYLPILTSKDGKKSLCMHDLQNAQLWTFKYRYWPNNKSRMYVLENTGDYVRTHDLQLGDSIVIYKDDENNRFVIGAKKAGDQQAATVPQVDEHISTLFPIFPIAQVDDYLSPMAPQVDISAFVPHADENHEIFDGILNSLPEIPVANVRYSDFFDPFDDGMDMANTLNANANQSASLHVTDDKSGHSLIPNPKSGPHM.

Residues 1–174 (MRGEERWQEQ…AAPRPSSHHT (174 aa)) are disordered. The segment covering 74 to 87 (ARPPTLAASAAAAS) has biased composition (low complexity). The span at 88-102 (SPPPPPPPPIPPLPP) shows a compositional bias: pro residues. Low complexity-rich tracts occupy residues 103-139 (STST…AAVS) and 156-169 (PRPA…APRP). Positions 181–284 (LQKELRYSDV…RFVIGAKKAG (104 aa)) form a DNA-binding region, TF-B3. The tract at residues 381-402 (LHVTDDKSGHSLIPNPKSGPHM) is disordered.

In terms of tissue distribution, expressed in anthers, pollen grains and young developing embryos.

The protein localises to the nucleus. Transcription repressor involved in flowering time regulation. Represses the flowering activator EHD1 by binding specifically to the DNA sequence 5'-CATGCATG-3 of its promoter. The sequence is that of B3 domain-containing protein LFL1 (LFL1) from Oryza sativa subsp. japonica (Rice).